The following is a 377-amino-acid chain: Nitric oxide reductase FlRd-NAD(+) reductase (377 aa).

It belongs to the FAD-dependent oxidoreductase family. FAD serves as cofactor.

It is found in the cytoplasm. It carries out the reaction 2 reduced [nitric oxide reductase rubredoxin domain] + NAD(+) + H(+) = 2 oxidized [nitric oxide reductase rubredoxin domain] + NADH. It participates in nitrogen metabolism; nitric oxide reduction. Its function is as follows. One of at least two accessory proteins for anaerobic nitric oxide (NO) reductase. Reduces the rubredoxin moiety of NO reductase. This chain is Nitric oxide reductase FlRd-NAD(+) reductase, found in Klebsiella pneumoniae subsp. pneumoniae (strain ATCC 700721 / MGH 78578).